Consider the following 144-residue polypeptide: D-aminoacyl-tRNA deacylase (144 aa).

Residues 136–137 carry the Gly-cisPro motif, important for rejection of L-amino acids motif; it reads GP.

It belongs to the DTD family. In terms of assembly, homodimer.

Its subcellular location is the cytoplasm. It carries out the reaction glycyl-tRNA(Ala) + H2O = tRNA(Ala) + glycine + H(+). It catalyses the reaction a D-aminoacyl-tRNA + H2O = a tRNA + a D-alpha-amino acid + H(+). Functionally, an aminoacyl-tRNA editing enzyme that deacylates mischarged D-aminoacyl-tRNAs. Also deacylates mischarged glycyl-tRNA(Ala), protecting cells against glycine mischarging by AlaRS. Acts via tRNA-based rather than protein-based catalysis; rejects L-amino acids rather than detecting D-amino acids in the active site. By recycling D-aminoacyl-tRNA to D-amino acids and free tRNA molecules, this enzyme counteracts the toxicity associated with the formation of D-aminoacyl-tRNA entities in vivo and helps enforce protein L-homochirality. This is D-aminoacyl-tRNA deacylase from Vibrio atlanticus (strain LGP32) (Vibrio splendidus (strain Mel32)).